The chain runs to 1227 residues: Codanin-1 (1227 aa).

Ala-2 carries the post-translational modification N-acetylalanine. Positions 63–294 are disordered; sequence RVLPQGPPTP…SLTDEPADPA (232 aa). Thr-71 is modified (phosphothreonine). Residues 128–137 are compositionally biased toward basic and acidic residues; that stretch reads ARERGGRGLE. The segment covering 155 to 167 has biased composition (low complexity); it reads GSGSPSRPSLTLS. The interaction with ASF1A/B stretch occupies residues 188–208; that stretch reads PTGTKPSRRINPTPVSEERSL. Residues 214 to 232 show a composition bias toward polar residues; the sequence is CFTSPPISCVPSSQPSALD. Positions 247–260 are enriched in basic and acidic residues; sequence LQEEREMLRKERSK. Ser-265 and Ser-285 each carry phosphoserine. 2 helical membrane-spanning segments follow: residues 312 to 332 and 626 to 646; these read CIAE…FQLL and FAVV…VAFL.

In terms of assembly, found in a cytosolic complex with ASF1A, ASF1B, IPO4 and histones H3.1 and H4. Ubiquitously expressed. Isoform 3 is not found in erythroid cells.

Its subcellular location is the cytoplasm. The protein resides in the nucleus. It is found in the membrane. In terms of biological role, may act as a negative regulator of ASF1 in chromatin assembly. The polypeptide is Codanin-1 (CDAN1) (Homo sapiens (Human)).